Consider the following 150-residue polypeptide: Ribosomal RNA large subunit methyltransferase H (150 aa).

S-adenosyl-L-methionine is bound by residues alanine 100 and 118–123 (LSEMTF).

This sequence belongs to the RNA methyltransferase RlmH family. As to quaternary structure, homodimer.

The protein resides in the cytoplasm. It catalyses the reaction pseudouridine(1915) in 23S rRNA + S-adenosyl-L-methionine = N(3)-methylpseudouridine(1915) in 23S rRNA + S-adenosyl-L-homocysteine + H(+). In terms of biological role, specifically methylates the pseudouridine at position 1915 (m3Psi1915) in 23S rRNA. This Helicobacter pylori (strain ATCC 700392 / 26695) (Campylobacter pylori) protein is Ribosomal RNA large subunit methyltransferase H.